The primary structure comprises 1027 residues: Multidrug resistance protein MdtC (1027 aa).

The next 12 helical transmembrane spans lie at 16–36, 333–353, 360–380, 387–407, 431–451, 463–483, 528–548, 853–873, 875–895, 897–917, 953–973, and 984–1004; these read LLSL…PVAP, EVER…FLFL, LIPA…MYLC, LSLM…IVVL, VGFT…PLLL, FAIT…TLTP, WIMA…ISAP, LILI…LYES, IHPL…LLAL, LFDT…IGIV, PIIM…LSSG, and ITIV…TPII.

This sequence belongs to the resistance-nodulation-cell division (RND) (TC 2.A.6) family. MdtC subfamily. In terms of assembly, part of a tripartite efflux system composed of MdtA, MdtB and MdtC. MdtC forms a heteromultimer with MdtB.

Its subcellular location is the cell inner membrane. The protein is Multidrug resistance protein MdtC of Proteus mirabilis (strain HI4320).